Reading from the N-terminus, the 282-residue chain is tRNA pseudouridine synthase A (282 aa).

The active-site Nucleophile is the Asp-61. Residue Tyr-119 participates in substrate binding.

It belongs to the tRNA pseudouridine synthase TruA family. In terms of assembly, homodimer.

It catalyses the reaction uridine(38/39/40) in tRNA = pseudouridine(38/39/40) in tRNA. Its function is as follows. Formation of pseudouridine at positions 38, 39 and 40 in the anticodon stem and loop of transfer RNAs. The sequence is that of tRNA pseudouridine synthase A from Nostoc sp. (strain PCC 7120 / SAG 25.82 / UTEX 2576).